The sequence spans 386 residues: Succinyl-diaminopimelate desuccinylase (386 aa).

A Zn(2+)-binding site is contributed by histidine 76. Residue aspartate 78 is part of the active site. Aspartate 110 contacts Zn(2+). The active-site Proton acceptor is glutamate 144. Zn(2+)-binding residues include glutamate 145, glutamate 173, and histidine 359.

This sequence belongs to the peptidase M20A family. DapE subfamily. In terms of assembly, homodimer. Zn(2+) serves as cofactor. The cofactor is Co(2+).

It catalyses the reaction N-succinyl-(2S,6S)-2,6-diaminopimelate + H2O = (2S,6S)-2,6-diaminopimelate + succinate. It functions in the pathway amino-acid biosynthesis; L-lysine biosynthesis via DAP pathway; LL-2,6-diaminopimelate from (S)-tetrahydrodipicolinate (succinylase route): step 3/3. In terms of biological role, catalyzes the hydrolysis of N-succinyl-L,L-diaminopimelic acid (SDAP), forming succinate and LL-2,6-diaminopimelate (DAP), an intermediate involved in the bacterial biosynthesis of lysine and meso-diaminopimelic acid, an essential component of bacterial cell walls. This chain is Succinyl-diaminopimelate desuccinylase, found in Chromohalobacter salexigens (strain ATCC BAA-138 / DSM 3043 / CIP 106854 / NCIMB 13768 / 1H11).